The chain runs to 235 residues: Large ribosomal subunit protein uL1 (235 aa).

Belongs to the universal ribosomal protein uL1 family. Part of the 50S ribosomal subunit.

Binds directly to 23S rRNA. The L1 stalk is quite mobile in the ribosome, and is involved in E site tRNA release. Functionally, protein L1 is also a translational repressor protein, it controls the translation of the L11 operon by binding to its mRNA. The protein is Large ribosomal subunit protein uL1 of Mycobacteroides abscessus (strain ATCC 19977 / DSM 44196 / CCUG 20993 / CIP 104536 / JCM 13569 / NCTC 13031 / TMC 1543 / L948) (Mycobacterium abscessus).